The following is a 117-amino-acid chain: Immunoglobulin heavy variable 3-21 (117 aa).

An N-terminal signal peptide occupies residues 1 to 19 (MELGLRWVFLVAILEGVQC). The interval 20-44 (EVQLVESGGGLVKPGGSLRLSCAAS) is framework-1. In terms of domain architecture, Ig-like spans 20–117 (EVQLVESGGG…EDTAVYYCAR (98 aa)). Residues Cys-41 and Cys-115 are joined by a disulfide bond. Residues 45 to 52 (GFTFSSYS) are complementarity-determining-1. Residues 53–69 (MNWVRQAPGKGLEWVSS) form a framework-2 region. The tract at residues 70 to 77 (ISSSSSYI) is complementarity-determining-2. Positions 78 to 115 (YYADSVKGRFTISRDNAKNSLYLQMNSLRAEDTAVYYC) are framework-3. The complementarity-determining-3 stretch occupies residues 116–117 (AR).

Immunoglobulins are composed of two identical heavy chains and two identical light chains; disulfide-linked.

Its subcellular location is the secreted. The protein localises to the cell membrane. Its function is as follows. V region of the variable domain of immunoglobulin heavy chains that participates in the antigen recognition. Immunoglobulins, also known as antibodies, are membrane-bound or secreted glycoproteins produced by B lymphocytes. In the recognition phase of humoral immunity, the membrane-bound immunoglobulins serve as receptors which, upon binding of a specific antigen, trigger the clonal expansion and differentiation of B lymphocytes into immunoglobulins-secreting plasma cells. Secreted immunoglobulins mediate the effector phase of humoral immunity, which results in the elimination of bound antigens. The antigen binding site is formed by the variable domain of one heavy chain, together with that of its associated light chain. Thus, each immunoglobulin has two antigen binding sites with remarkable affinity for a particular antigen. The variable domains are assembled by a process called V-(D)-J rearrangement and can then be subjected to somatic hypermutations which, after exposure to antigen and selection, allow affinity maturation for a particular antigen. The polypeptide is Immunoglobulin heavy variable 3-21 (Homo sapiens (Human)).